Here is a 327-residue protein sequence, read N- to C-terminus: Olfactory receptor 9G4 (327 aa).

Residues 1 to 43 lie on the Extracellular side of the membrane; the sequence is MIFPSHDSQAFTSVDMEVGNCTILTEFILLGFSADSQWQPILF. Residue asparagine 20 is glycosylated (N-linked (GlcNAc...) asparagine). The helical transmembrane segment at 44–64 threads the bilayer; the sequence is GVFLMLYLITLSGNMTLVILI. Topologically, residues 65–71 are cytoplasmic; the sequence is RTDSHLH. Residues 72–92 traverse the membrane as a helical segment; sequence TPMYFFIGNLSFLDFWYTSVY. Residues 93-113 are Extracellular-facing; it reads TPKILASCVSEDKRISLAGCG. The cysteines at positions 112 and 194 are disulfide-linked. The helical transmembrane segment at 114–134 threads the bilayer; the sequence is AQLFFSCVVAYTECYLLAAMA. Over 135–152 the chain is Cytoplasmic; that stretch reads YDRHAAICNPLLYSGTMS. The chain crosses the membrane as a helical span at residues 153 to 173; the sequence is TALCTGLVAGSYIGGFLNAIA. Residues 174-212 are Extracellular-facing; that stretch reads HTANTFRLHFCGKNIIDHFFCDAPPLVKMSCTNTRVYEK. The chain crosses the membrane as a helical span at residues 213-233; that stretch reads VLLGVVGFTVLSSILAILISY. Topologically, residues 234–252 are cytoplasmic; that stretch reads VNILLAILRIHSASGRHKA. Residues 253–273 traverse the membrane as a helical segment; that stretch reads FSTCASHLISVMLFYGSLLFM. The Extracellular portion of the chain corresponds to 274–286; it reads YSRPSSTYSLERD. A helical transmembrane segment spans residues 287-307; the sequence is KVAALFYTVINPLLNPLIYSL. The Cytoplasmic portion of the chain corresponds to 308–327; sequence RNKDIKEAFRKATQTIQPQT.

The protein belongs to the G-protein coupled receptor 1 family.

It localises to the cell membrane. In terms of biological role, odorant receptor. The protein is Olfactory receptor 9G4 (OR9G4) of Homo sapiens (Human).